We begin with the raw amino-acid sequence, 55 residues long: uncharacterized protein (55 aa).

This is an uncharacterized protein from Escherichia coli (Bacteriophage T4).